The following is a 78-amino-acid chain: Kassorin-S (78 aa).

An N-terminal signal peptide occupies residues 1–22 (MLTLKKSMLLLFFLGMVSLSLA). Positions 23 to 64 (NSKRADEEGEDKRADEEGEDKRADEEGEDKRADEEGEEKRKR) are excised as a propeptide. Residues 24–60 (SKRADEEGEDKRADEEGEDKRADEEGEDKRADEEGEE) form a disordered region. A compositionally biased stretch (basic and acidic residues) spans 25–60 (KRADEEGEDKRADEEGEDKRADEEGEDKRADEEGEE). Leucine 77 carries the leucine amide modification.

The protein belongs to the frog skin active peptide (FSAP) family. Brevinin subfamily. Expressed by the skin glands.

It is found in the secreted. Antimicrobial peptide. Active against the Gram-positive bacterium S.aureus (MIC=30 uM) and the yeast C.albicans (MIC=100 uM). Not effective against the Gram-negative bacterium E.coli at concentrations up to 250 uM. Lacks ability to induce contraction of smooth muscle in isolated guinea pig urinary bladder. Elicits histamine release from rat peritoneal mast cells. This Kassina senegalensis (Senegal running frog) protein is Kassorin-S.